The chain runs to 646 residues: Interferon-induced GTP-binding protein MxA (646 aa).

Residues 34–307 (DLALPAIAVI…LVHHIQKSLP (274 aa)) form the Dynamin-type G domain. Residues 44–51 (GDQSSGKS) are G1 motif. 44–51 (GDQSSGKS) provides a ligand contact to GTP. The tract at residues 69–71 (VTR) is G2 motif. Residues 145-148 (DLPG) form a G3 motif region. GTP contacts are provided by residues 145–149 (DLPGI) and 214–217 (TKPD). A G4 motif region spans residues 214–217 (TKPD). A G5 motif region spans residues 246–249 (RCRG). One can recognise a GED domain in the interval 546–637 (LREMRLHLKS…PLGHLLEVTF (92 aa)).

It belongs to the TRAFAC class dynamin-like GTPase superfamily. Dynamin/Fzo/YdjA family.

Its subcellular location is the cytoplasm. This Danio rerio (Zebrafish) protein is Interferon-induced GTP-binding protein MxA (mxa).